A 364-amino-acid polypeptide reads, in one-letter code: DNA replication and repair protein RecF (364 aa).

30 to 37 (GDNAQGKT) lines the ATP pocket.

This sequence belongs to the RecF family.

Its subcellular location is the cytoplasm. Functionally, the RecF protein is involved in DNA metabolism; it is required for DNA replication and normal SOS inducibility. RecF binds preferentially to single-stranded, linear DNA. It also seems to bind ATP. The protein is DNA replication and repair protein RecF of Clostridium kluyveri (strain ATCC 8527 / DSM 555 / NBRC 12016 / NCIMB 10680 / K1).